Here is a 35-residue protein sequence, read N- to C-terminus: Cecropin (35 aa).

An Isoleucine amide modification is found at I35.

It belongs to the cecropin family.

It is found in the secreted. In terms of biological role, cecropins have lytic and antibacterial activity against several Gram-positive and Gram-negative bacteria. The polypeptide is Cecropin (Bombyx mori (Silk moth)).